The chain runs to 38 residues: Mu/omega-theraphotoxin-Mb1a (38 aa).

3 disulfides stabilise this stretch: Cys7–Cys21, Cys14–Cys26, and Cys20–Cys33. Thr38 bears the Threonine amide mark.

Belongs to the neurotoxin 10 (Hwtx-1) family. 28 (Jztx-11) subfamily. As to expression, expressed by the venom gland.

The protein localises to the secreted. Functionally, paralytic toxin that inhibits insect voltage-gated sodium (Nav) and calcium (Cav) channels in P.americana (American cockroach) dorsal unpaired median (DUM) neurons, and inhibits the B.germanica (German cockroach) Nav channel (BgNaV1). Also shows a delay in fast inactivation when tested on BgNaV1. May act as a gating-modifier toxin on Nav and as a pore blocker on Cav. In vivo, reversibly paralyzes both L.cuprina (Australian sheep blowfly) and M.domestica (housefly), but does not affect larvae of H.armigera (cotton bollworms). This chain is Mu/omega-theraphotoxin-Mb1a, found in Monocentropus balfouri (Socotra Island blue baboon tarantula).